The following is a 330-amino-acid chain: Phosphate acyltransferase (330 aa).

The protein belongs to the PlsX family. As to quaternary structure, homodimer. Probably interacts with PlsY.

It localises to the cytoplasm. The catalysed reaction is a fatty acyl-[ACP] + phosphate = an acyl phosphate + holo-[ACP]. Its pathway is lipid metabolism; phospholipid metabolism. In terms of biological role, catalyzes the reversible formation of acyl-phosphate (acyl-PO(4)) from acyl-[acyl-carrier-protein] (acyl-ACP). This enzyme utilizes acyl-ACP as fatty acyl donor, but not acyl-CoA. The chain is Phosphate acyltransferase from Streptococcus pneumoniae (strain P1031).